Here is a 162-residue protein sequence, read N- to C-terminus: Retinoic acid receptor responder protein 2 (162 aa).

Positions 1 to 20 (MKCLLISLALWLGTVGTRGT) are cleaved as a signal peptide. Cystine bridges form between Cys79-Cys89, Cys100-Cys119, and Cys103-Cys134. Residues 157–162 (RALRTK) constitute a propeptide that is removed on maturation.

Post-translationally, secreted in an inactive precursor form, prochemerin, which is proteolytically processed by a variety of extracellular proteases to generate forms with differing levels of bioactivity. For example, the removal of six amino acids results in chemerin-156, which exhibits the highest activity, while removal of seven amino acids results in chemerin-155 which has slightly less activity. Some proteases are able to cleave at more than one site and chemerin forms may be sequentially processed by different enzymes to modulate activity levels. The coordinated expression and activity of chemerin-modifying enzymes is essential for regulating its bioactivation, inactivation and, consequently, biological function. Cathepsin G cleaves seven C-terminal amino acids from prochemerin (chemerin-155), elastase is able to cleave six (chemerin-156), eight (chemerin-154) or eleven (chemerin-151), plasmin cleaves five amino acids (chemerin-157), and tryptase cleaves five (chemerin-157) or eight (chemerin-154). Multiple cleavages might be required to fully activate chemerin, with an initial tryptase cleavage resulting in chemerin with low activity (chemerin-157), and a second cleavage by carboxypeptidase N or B producing highly active chemerin (chemerin-156). Expressed in the differentiated adipocytes (at protein level). Abundantly expressed in the liver, adipose tissue including visceral, epididymal, and brown adipose tissue.

The protein resides in the secreted. In terms of biological role, adipocyte-secreted protein (adipokine) that regulates adipogenesis, metabolism and inflammation through activation of the chemokine-like receptor 1 (CMKLR1). Also acts as a ligand for CMKLR2. Can also bind to C-C chemokine receptor-like 2 (CCRL2), but with a lower affinity than it does to CMKLR1 or CMKLR2. Positively regulates adipocyte differentiation, modulates the expression of adipocyte genes involved in lipid and glucose metabolism and might play a role in angiogenesis, a process essential for the expansion of white adipose tissue. Also acts as a pro-inflammatory adipokine, causing an increase in secretion of pro-inflammatory and prodiabetic adipokines, which further impair adipose tissue metabolic function and have negative systemic effects including impaired insulin sensitivity, altered glucose and lipid metabolism, and a decrease in vascular function in other tissues. Can have both pro- and anti-inflammatory properties depending on the modality of enzymatic cleavage by different classes of proteases. Acts as a chemotactic factor for leukocyte populations expressing CMKLR1, particularly immature plasmacytoid dendritic cells, but also immature myeloid DCs, macrophages and natural killer cells. Exerts an anti-inflammatory role by preventing TNF/TNFA-induced VCAM1 expression and monocytes adhesion in vascular endothelial cells. The effect is mediated via inhibiting activation of NF-kappa-B and CRK/p38 through stimulation of AKT1/NOS3 signaling and nitric oxide production. Exhibits an antimicrobial function in the skin. This is Retinoic acid receptor responder protein 2 (Rarres2) from Mus musculus (Mouse).